A 1129-amino-acid chain; its full sequence is Ubiquitin carboxyl-terminal hydrolase 15 (1129 aa).

Positions 1-26 (MVLSNVDAEEVNMDSSMELEESSQEP) are disordered. Residues 7 to 23 (DAEEVNMDSSMELEESS) show a composition bias toward acidic residues. The MATH domain occupies 51–204 (HASYSWVVKN…NDEICISVTV (154 aa)). Residues 230 to 545 (VGLKNQGATC…NAYMLVYFRK (316 aa)) form the USP domain. Catalysis depends on Cys239, which acts as the Nucleophile. The active-site Proton acceptor is the His481.

This sequence belongs to the peptidase C19 family.

The protein resides in the nucleus. It catalyses the reaction Thiol-dependent hydrolysis of ester, thioester, amide, peptide and isopeptide bonds formed by the C-terminal Gly of ubiquitin (a 76-residue protein attached to proteins as an intracellular targeting signal).. Functionally, hydrolase that deubiquitinates target proteins. Cleaves the UBL propeptide in sde2. Involved in regulating the steady-state levels of proteins including prp4. The polypeptide is Ubiquitin carboxyl-terminal hydrolase 15 (Schizosaccharomyces pombe (strain 972 / ATCC 24843) (Fission yeast)).